Reading from the N-terminus, the 337-residue chain is Undecaprenyl-phosphate 4-deoxy-4-formamido-L-arabinose transferase (337 aa).

2 helical membrane passes run 235-255 (LSII…LLIV) and 270-290 (FVLF…MGLL).

Belongs to the glycosyltransferase 2 family.

It is found in the cell inner membrane. The catalysed reaction is UDP-4-deoxy-4-formamido-beta-L-arabinose + di-trans,octa-cis-undecaprenyl phosphate = 4-deoxy-4-formamido-alpha-L-arabinopyranosyl di-trans,octa-cis-undecaprenyl phosphate + UDP. It functions in the pathway glycolipid biosynthesis; 4-amino-4-deoxy-alpha-L-arabinose undecaprenyl phosphate biosynthesis; 4-amino-4-deoxy-alpha-L-arabinose undecaprenyl phosphate from UDP-4-deoxy-4-formamido-beta-L-arabinose and undecaprenyl phosphate: step 1/2. The protein operates within bacterial outer membrane biogenesis; lipopolysaccharide biosynthesis. Functionally, catalyzes the transfer of 4-deoxy-4-formamido-L-arabinose from UDP to undecaprenyl phosphate. The modified arabinose is attached to lipid A and is required for resistance to polymyxin and cationic antimicrobial peptides. This chain is Undecaprenyl-phosphate 4-deoxy-4-formamido-L-arabinose transferase, found in Pseudomonas syringae pv. syringae (strain B728a).